Here is a 161-residue protein sequence, read N- to C-terminus: Glutaredoxin-2, mitochondrial (161 aa).

The N-terminal 19 residues, 1–19, are a transit peptide targeting the mitochondrion; the sequence is MLWRRAALAGTRLVWSRSG. Residue Ser20 is modified to Phosphoserine. The Glutaredoxin domain occupies 54 to 154; sequence VNQIQETISD…PLVHQCYLKK (101 aa). Cys65 lines the [2Fe-2S] cluster pocket. Lys71 lines the glutathione pocket. Cys74 is subject to S-glutathionyl cysteine; alternate. A disulfide bridge links Cys74 with Cys77. Glutathione-binding residues include Gln106 and Val118. Cys150 lines the [2Fe-2S] cluster pocket.

It belongs to the glutaredoxin family. As to quaternary structure, monomer; active form. Homodimer; inactive form. The homodimer is probably linked by 1 2Fe-2S cluster.

The protein resides in the mitochondrion. Its activity is regulated as follows. The 2Fe-2S present in the homodimer leads to inactivation of the enzyme. The 2Fe-2S may serve as a redox sensor: the presence of one-electron oxidants or reductants leading to the loss of the 2Fe-2S cluster, subsequent monomerization and activation of the enzyme. Its function is as follows. Glutathione-dependent oxidoreductase that facilitates the maintenance of mitochondrial redox homeostasis upon induction of apoptosis by oxidative stress. Involved in response to hydrogen peroxide and regulation of apoptosis caused by oxidative stress. Acts as a very efficient catalyst of monothiol reactions because of its high affinity for protein glutathione-mixed disulfides. Can receive electrons not only from glutathione (GSH), but also from thioredoxin reductase supporting both monothiol and dithiol reactions. Efficiently catalyzes both glutathionylation and deglutathionylation of mitochondrial complex I, which in turn regulates the superoxide production by the complex. Overexpression decreases the susceptibility to apoptosis and prevents loss of cardiolipin and cytochrome c release. This is Glutaredoxin-2, mitochondrial (GLRX2) from Pongo abelii (Sumatran orangutan).